We begin with the raw amino-acid sequence, 127 residues long: Histone H2B type 1-A (127 aa).

Residues 1–36 form a disordered region; that stretch reads MPEVSSKGATISKKGFKKAVVKTQKKEGKKRKRTRK. Residue proline 2 is modified to N-acetylproline. 7 positions are modified to N6-acetyllysine; alternate: lysine 7, lysine 13, lysine 14, lysine 17, lysine 18, lysine 22, and lysine 25. 8 positions are modified to N6-crotonyllysine; alternate: lysine 7, lysine 13, lysine 14, lysine 17, lysine 18, lysine 22, lysine 25, and lysine 36. Lysine 7 and lysine 13 each carry N6-lactoyllysine; alternate. Residue lysine 7 forms a Glycyl lysine isopeptide (Lys-Gly) (interchain with G-Cter in SUMO2); alternate linkage. 4 positions are modified to N6-lactoyllysine; alternate: lysine 17, lysine 18, lysine 22, and lysine 25. Lysine 22 participates in a covalent cross-link: Glycyl lysine isopeptide (Lys-Gly) (interchain with G-Cter in SUMO2); alternate. Lysine 36 is modified (N6-succinyllysine; alternate). Lysine 36 is covalently cross-linked (Glycyl lysine isopeptide (Lys-Gly) (interchain with G-Cter in ubiquitin); alternate). Serine 38 is modified (phosphoserine). N6-lactoyllysine; alternate is present on lysine 45. Lysine 48 carries the N6-methyllysine modification. Lysine 59 is subject to N6,N6-dimethyllysine. Arginine 81 is modified (dimethylated arginine). Residue serine 86 is modified to Phosphoserine. Lysine 87 carries the post-translational modification N6-acetyllysine; alternate. An N6-lactoyllysine; alternate modification is found at lysine 87. Lysine 87 carries the N6,N6,N6-trimethyllysine; alternate modification. Omega-N-methylarginine is present on residues arginine 88 and arginine 94. Lysine 110 carries the post-translational modification N6-lactoyllysine; alternate. Lysine 110 carries the N6-methyllysine modification. Threonine 117 bears the Phosphothreonine mark. N6-lactoyllysine; alternate occurs at positions 118 and 122. N6-succinyllysine; alternate occurs at positions 118 and 122. Residue lysine 118 is modified to N6-methylated lysine; alternate. A Glycyl lysine isopeptide (Lys-Gly) (interchain with G-Cter in ubiquitin); alternate cross-link involves residue lysine 122.

Belongs to the histone H2B family. The nucleosome is a histone octamer containing two molecules each of H2A, H2B, H3 and H4 assembled in one H3-H4 heterotetramer and two H2A-H2B heterodimers. In terms of processing, monoubiquitination at Lys-36 (H2BK34Ub) by the MSL1/MSL2 dimer is required for histone H3 'Lys-4' (H3K4me) and 'Lys-79' (H3K79me) methylation and transcription activation at specific gene loci, such as HOXA9 and MEIS1 loci. Similarly, monoubiquitination at Lys-122 (H2BK120Ub) by the RNF20/40 complex gives a specific tag for epigenetic transcriptional activation and is also prerequisite for histone H3 'Lys-4' and 'Lys-79' methylation. It also functions cooperatively with the FACT dimer to stimulate elongation by RNA polymerase II. H2BK120Ub also acts as a regulator of mRNA splicing: deubiquitination by USP49 is required for efficient cotranscriptional splicing of a large set of exons. Post-translationally, crotonylation (Kcr) is specifically present in male germ cells and marks testis-specific genes in post-meiotic cells, including X-linked genes that escape sex chromosome inactivation in haploid cells. Crotonylation marks active promoters and enhancers and confers resistance to transcriptional repressors. It is also associated with post-meiotically activated genes on autosomes. Acetylated during spermatogenesis. Acetylated form is most abundant in spermatogonia compared to spermatocytes and round spermatids. In terms of processing, phosphorylated at Thr-117 in spermatogonia, spermatocytes and round spermatids. Post-translationally, methylated at Lys-118 in spermatogonia, spermatocytes and round spermatids. Lactylated in macrophages by EP300/P300 by using lactoyl-CoA directly derived from endogenous or exogenous lactate, leading to stimulates gene transcription. As to expression, mainly expressed in testis, and the corresponding protein is also present in mature sperm (at protein level). Also found in some fat cells.

Its subcellular location is the nucleus. It localises to the chromosome. In terms of biological role, variant histone specifically required to direct the transformation of dissociating nucleosomes to protamine in male germ cells. Entirely replaces classical histone H2B prior nucleosome to protamine transition and probably acts as a nucleosome dissociating factor that creates a more dynamic chromatin, facilitating the large-scale exchange of histones. Core component of nucleosome. Nucleosomes wrap and compact DNA into chromatin, limiting DNA accessibility to the cellular machineries which require DNA as a template. Histones thereby play a central role in transcription regulation, DNA repair, DNA replication and chromosomal stability. DNA accessibility is regulated via a complex set of post-translational modifications of histones, also called histone code, and nucleosome remodeling. Also found in fat cells, its function and the presence of post-translational modifications specific to such cells are still unclear. The polypeptide is Histone H2B type 1-A (Homo sapiens (Human)).